The sequence spans 196 residues: Indolepyruvate oxidoreductase subunit IorB (196 aa).

In terms of assembly, heterodimer of the IorA and IorB subunits.

The catalysed reaction is indole-3-pyruvate + 2 oxidized [2Fe-2S]-[ferredoxin] + CoA = (indol-3-yl)acetyl-CoA + 2 reduced [2Fe-2S]-[ferredoxin] + CO2 + H(+). Its function is as follows. Catalyzes the ferredoxin-dependent oxidative decarboxylation of arylpyruvates. The chain is Indolepyruvate oxidoreductase subunit IorB (iorB) from Methanothermobacter thermautotrophicus (strain ATCC 29096 / DSM 1053 / JCM 10044 / NBRC 100330 / Delta H) (Methanobacterium thermoautotrophicum).